Consider the following 1026-residue polypeptide: Contactin-4 (1026 aa).

The first 18 residues, 1-18 (MRLPWELLVLQSFMLCLA), serve as a signal peptide directing secretion. Ig-like C2-type domains follow at residues 32-117 (PSHV…AKLQ), 122-206 (ENFK…HQVL), 225-311 (PKIE…GQVT), 316-400 (PNWV…AELS), 406-493 (PDFS…GNVV), and 497-586 (PTKV…DKLS). 6 cysteine pairs are disulfide-bonded: Cys50/Cys100, Cys144/Cys194, Cys247/Cys295, Cys337/Cys384, Cys429/Cys477, and Cys519/Cys576. N-linked (GlcNAc...) asparagine glycans are attached at residues Asn65, Asn90, and Asn191. 3 N-linked (GlcNAc...) asparagine glycosylation sites follow: Asn370, Asn375, and Asn466. 4 consecutive Fibronectin type-III domains span residues 599 to 697 (PPEA…TEEA), 702 to 799 (TPAN…SAEE), 804 to 899 (PPAS…TRKP), and 900 to 995 (PPSQ…ISNS). The interval 685–710 (PSRPSEKRRTEEALPEVTPANVSGGG) is disordered. Residues 687–696 (RPSEKRRTEE) show a composition bias toward basic and acidic residues. N-linked (GlcNAc...) asparagine glycosylation is found at Asn705, Asn764, Asn858, Asn893, Asn911, Asn929, and Asn954. The GPI-anchor amidated serine moiety is linked to residue Ser1000. Residues 1001–1026 (GASTSNACTLSAISTIMISLTARSSL) constitute a propeptide, removed in mature form.

Belongs to the immunoglobulin superfamily. Contactin family. In terms of assembly, interacts with PTPRG. As to expression, specifically expressed in the nervous system. Not expressed in heart, spleen, lung, liver, kidney or skeletal muscle. In the hippocampus, it is highly expressed in CA1 pyramidal cells and weakly expressed in other regions of the hippocampus.

The protein resides in the cell membrane. It localises to the secreted. Functionally, contactins mediate cell surface interactions during nervous system development. Has some neurite outgrowth-promoting activity. May be involved in synaptogenesis. In Rattus norvegicus (Rat), this protein is Contactin-4 (Cntn4).